The primary structure comprises 369 residues: Methylthioribose-1-phosphate isomerase (369 aa).

Residues 54-56, arginine 95, and glutamine 208 each bind substrate; that span reads RGA. Residue aspartate 249 is the Proton donor of the active site. Position 259 to 260 (259 to 260) interacts with substrate; sequence NK.

It belongs to the eIF-2B alpha/beta/delta subunits family. MtnA subfamily.

It catalyses the reaction 5-(methylsulfanyl)-alpha-D-ribose 1-phosphate = 5-(methylsulfanyl)-D-ribulose 1-phosphate. Its pathway is amino-acid biosynthesis; L-methionine biosynthesis via salvage pathway; L-methionine from S-methyl-5-thio-alpha-D-ribose 1-phosphate: step 1/6. In terms of biological role, catalyzes the interconversion of methylthioribose-1-phosphate (MTR-1-P) into methylthioribulose-1-phosphate (MTRu-1-P). The chain is Methylthioribose-1-phosphate isomerase from Desulfatibacillum aliphaticivorans.